The sequence spans 562 residues: Arginine--tRNA ligase (562 aa).

A 'HIGH' region motif is present at residues 122–132; sequence PNIAKDMHVGH.

This sequence belongs to the class-I aminoacyl-tRNA synthetase family. Monomer.

It localises to the cytoplasm. It catalyses the reaction tRNA(Arg) + L-arginine + ATP = L-arginyl-tRNA(Arg) + AMP + diphosphate. This chain is Arginine--tRNA ligase, found in Chlamydia abortus (strain DSM 27085 / S26/3) (Chlamydophila abortus).